The sequence spans 66 residues: Large ribosomal subunit protein bL33c (66 aa).

It belongs to the bacterial ribosomal protein bL33 family.

The protein localises to the plastid. It is found in the chloroplast. In Populus alba (White poplar), this protein is Large ribosomal subunit protein bL33c.